Here is a 614-residue protein sequence, read N- to C-terminus: Fem-3 mRNA-binding factor 1 (614 aa).

Polar residues predominate over residues 1-24 (MDQSKMRYTNQFRKTPQKPTSTEV). The disordered stretch occupies residues 1-34 (MDQSKMRYTNQFRKTPQKPTSTEVGNHHTPAHSP). A PUM-HD domain is found at 160–564 (TRSNNVLPTW…KMIETLAHLR (405 aa)). Pumilio repeat units lie at residues 185-223 (EVLD…QLFE), 224-263 (QVIG…NIKR), 269-305 (NFIS…KLVQ), 306-342 (ALPR…EFIV), 343-382 (DFVA…DLTS), 398-434 (SVTN…CIIE), 436-471 (CLMR…EMMD), and 483-519 (TGKD…RQTK). Residues 283–614 (FACRVIQSSL…NLRLMRTFSP (332 aa)) form a binding to gld-3 isoform A region.

In terms of assembly, interacts (via C-terminus) with gld-3 isoform A in an RNA-independent manner. Expressed specifically in the germline (at protein level).

The protein resides in the cytoplasm. In terms of biological role, RNA-binding protein that binds to the consensus sequence 5'-UGUGCCAUA-3' in mRNA 3'-UTRs. Involved in the control of stem cells and sex determination in the C.elegans hermaphrodite germline. May also play a role in the hermaphrodite germline proliferation and oogenesis. Binds specifically to the regulatory region of fem-3 3'-UTR and mediates the sperm/oocyte switch. Negatively regulates gld-3 expression, possibly by directly binding to two sites within the 3'-UTR of gld-3 isoform b. In association with the cye-1/cdk-2 complex, negatively regulates gld-1 expression in the distal germline cells of the mitotic zone. By binding to the 3'-UTR, represses phosphatase lip-1 expression in the distal part of the germline mitotic zone. Suppresses germline tumor formation by preventing the dedifferentiation of secondary spermatocytes. In Caenorhabditis elegans, this protein is Fem-3 mRNA-binding factor 1 (fbf-1).